A 30-amino-acid chain; its full sequence is Cyclotide cter-F (30 aa).

A cross-link (cyclopeptide (Gly-Asp)) is located at residues 1–30 (GIPCGESCVFIPCISSVVGCSCKSKVCYLD). 3 cysteine pairs are disulfide-bonded: Cys4–Cys20, Cys8–Cys22, and Cys13–Cys27.

In terms of processing, contains 3 disulfide bonds. This is a cyclic peptide.

Functionally, probably participates in a plant defense mechanism. This Clitoria ternatea (Butterfly pea) protein is Cyclotide cter-F.